The sequence spans 174 residues: Nicotinamide-nucleotide adenylyltransferase (174 aa).

The protein belongs to the archaeal NMN adenylyltransferase family.

It localises to the cytoplasm. It carries out the reaction beta-nicotinamide D-ribonucleotide + ATP + H(+) = diphosphate + NAD(+). It participates in cofactor biosynthesis; NAD(+) biosynthesis; NAD(+) from nicotinamide D-ribonucleotide: step 1/1. The sequence is that of Nicotinamide-nucleotide adenylyltransferase from Methanospirillum hungatei JF-1 (strain ATCC 27890 / DSM 864 / NBRC 100397 / JF-1).